The sequence spans 447 residues: Phosphoglucosamine mutase (447 aa).

The Phosphoserine intermediate role is filled by S88. 4 residues coordinate Mg(2+): S88, D231, D233, and D235. Residue S88 is modified to Phosphoserine.

This sequence belongs to the phosphohexose mutase family. Monomer. Also forms large aggregates. The cofactor is Mg(2+). Post-translationally, activated by phosphorylation. Glucose-1,6-bisphosphate or fructose-1,6-bisphosphate can activate the enzyme in vitro. However, since glucose-1,6-bisphosphate is not believed to form in methanogens, the physiologically relevant activator might be a serine kinase protein.

The enzyme catalyses alpha-D-glucosamine 1-phosphate = D-glucosamine 6-phosphate. In terms of biological role, catalyzes the conversion of glucosamine-6-phosphate to glucosamine-1-phosphate. Also catalyzes the isomerization of glucose-1-phosphate to glucose-6-phosphate, but at a 5-fold lower rate. This is Phosphoglucosamine mutase (glmM) from Methanococcus maripaludis (strain DSM 14266 / JCM 13030 / NBRC 101832 / S2 / LL).